A 360-amino-acid chain; its full sequence is Ankyrin repeat domain-containing protein 2 (360 aa).

Positions 5–120 are may mediate interaction with PML, p53/TP53 and YBX1; it reads PSWAGVGALA…GIQNLIELRK (116 aa). The residue at position 99 (S99) is a Phosphoserine; by PKB/AKT2. Residues 126 to 147 are disordered; it reads KRDALAASHEPPPEPEEITGPV. The segment covering 138–147 has biased composition (acidic residues); the sequence is PEPEEITGPV. ANK repeat units follow at residues 147–176, 180–209, 213–242, 246–275, and 279–308; these read VDEETFLKAAVEGKMKVIEKFLADGGSADT, FRRTALHRASLEGHMEILEKLLDNGATVDF, LDCTAMHWACRGGHLEVVKLLQSHGADTNV, LLSTPLHVAVRTGQVEIVEHFLSLGLEINA, and EGDTALHDAVRLNRYKIIKLLLLHGADMMT. Basic and acidic residues predominate over residues 330-342; that stretch reads ALEHPEPGAEHNG. The interval 330–360 is disordered; sequence ALEHPEPGAEHNGLEGPNDSGRETPQPVPAQ.

Interacts with ID3; both proteins cooperate in myoblast differentiation. Interacts with TTN/titin. Interacts (via ANK repeats) with TCAP; the interaction is direct. Interacts with TJP1 (via PDZ domains). Interacts with PML; the interaction is direct. Interacts with p53/TP53. Interacts with YBX1. Interacts with AKT2. In terms of processing, phosphorylation at Ser-99 by PKB/AKT2 in response to oxidative stress induces translocation to the nucleus and negatively regulates myoblast differentiation. As to expression, mostly expressed in skeletal and cardiac muscles. Found in slow fibers. Also expressed in kidney, but to a lower extent (at protein level).

The protein resides in the cytoplasm. Its subcellular location is the myofibril. It is found in the sarcomere. The protein localises to the i band. It localises to the cytosol. The protein resides in the nucleus. Its subcellular location is the PML body. Functionally, functions as a negative regulator of myocyte differentiation. May interact with both sarcoplasmic structural proteins and nuclear proteins to regulate gene expression during muscle development and in response to muscle stress. The protein is Ankyrin repeat domain-containing protein 2 (ANKRD2) of Homo sapiens (Human).